Consider the following 376-residue polypeptide: Deoxyguanosinetriphosphate triphosphohydrolase-like protein (376 aa).

One can recognise an HD domain in the interval 62–198 (RLTHSLEVSA…AALADDISYI (137 aa)).

It belongs to the dGTPase family. Type 2 subfamily.

In Rickettsia canadensis (strain McKiel), this protein is Deoxyguanosinetriphosphate triphosphohydrolase-like protein.